Reading from the N-terminus, the 392-residue chain is Probable nucleoredoxin 3 (392 aa).

2 Thioredoxin domains span residues 17–171 (LYSI…DSKR) and 177–326 (EKLL…ELKA).

The protein belongs to the nucleoredoxin family.

It catalyses the reaction [protein]-dithiol + NAD(+) = [protein]-disulfide + NADH + H(+). The enzyme catalyses [protein]-dithiol + NADP(+) = [protein]-disulfide + NADPH + H(+). Functionally, probable thiol-disulfide oxidoreductase that may participate in various redox reactions. This is Probable nucleoredoxin 3 from Arabidopsis thaliana (Mouse-ear cress).